Reading from the N-terminus, the 92-residue chain is Small ribosomal subunit protein uS19c (92 aa).

The protein belongs to the universal ribosomal protein uS19 family.

The protein resides in the plastid. The protein localises to the chloroplast. Protein S19 forms a complex with S13 that binds strongly to the 16S ribosomal RNA. The sequence is that of Small ribosomal subunit protein uS19c from Chaetosphaeridium globosum (Charophycean green alga).